The sequence spans 541 residues: MAKIIAFDEEARRGLERGLNALADAVKVTLGPKGRNVVLEKKWGAPTITNDGVSIAKEIELEDPYEKIGAELVKEVAKKTDDVAGDGTTTATVLAQALVREGLRNVAAGANPLGLKRGIEKAVEAVTVRLLETAKEIDTKEQIAATAGISAGDPSIGELIAEAMDKVGKEGVITVEESNTFGLQLELTEGMRFDKGYISAYFATDPERQEAVLEDAYILLVSSKISTVKDLLPLLEKVIQSGKPLVIIAEDVEGEALSTLVVNKIRGTFKSVAVKAPGFGDRRKAQLADIAILTGGEVISEEVGLSLETAGLELLGQARKVVITKDETTIVEGAGDPEAIAGRVAQIRAEIENSDSDYDREKLQERLAKLAGGVAVIKAGAATEVELKERKHRIEDAVRNAKAAVEEGIVAGGGVALLQSAPALDDLKLEGDEATGANIVRVALEAPLKQIAFNAGLEPGVVAEKVRNLPAGHGLNASTNEYGDLLEAGINDPVKVTRSALQNAASIAALFLTTEAVVADKPEKAGAPVGDPTGGMGGMDF.

ATP contacts are provided by residues 29-32 (TLGP), 86-90 (DGTTT), Gly413, and Asp492.

This sequence belongs to the chaperonin (HSP60) family. Forms a cylinder of 14 subunits composed of two heptameric rings stacked back-to-back. Interacts with the co-chaperonin GroES.

The protein localises to the cytoplasm. The catalysed reaction is ATP + H2O + a folded polypeptide = ADP + phosphate + an unfolded polypeptide.. Functionally, together with its co-chaperonin GroES, plays an essential role in assisting protein folding. The GroEL-GroES system forms a nano-cage that allows encapsulation of the non-native substrate proteins and provides a physical environment optimized to promote and accelerate protein folding. The protein is Chaperonin GroEL 1 of Rhodococcus jostii (strain RHA1).